The sequence spans 265 residues: MSDILNTILARKADEIAERSARVPLAELVARSADLPLTRGFAAAMKASIAAGEPAVIAEVKKASPSKGVIRPDFHPADIAVSYEFGGASCLSVLTDMYFFQGSDAYLQQAREACTLPVLRKDFTVDPYQVYEARVLGADCILLIVSALEDQQLADLSGLAMQLGLDVLVEVHDIDELERAVQVPVPLVGINNRNLRTFEVSLQTTLDMRAAVPRDRVLVTESGIVTASDVQLMRSNGVNAFLVGETFMRAPEPGEALRQLFFAHD.

The protein belongs to the TrpC family.

The enzyme catalyses 1-(2-carboxyphenylamino)-1-deoxy-D-ribulose 5-phosphate + H(+) = (1S,2R)-1-C-(indol-3-yl)glycerol 3-phosphate + CO2 + H2O. It functions in the pathway amino-acid biosynthesis; L-tryptophan biosynthesis; L-tryptophan from chorismate: step 4/5. The sequence is that of Indole-3-glycerol phosphate synthase from Xanthomonas campestris pv. campestris (strain 8004).